The sequence spans 176 residues: Translation initiation factor IF-3 (176 aa).

This sequence belongs to the IF-3 family. Monomer.

It is found in the cytoplasm. Its function is as follows. IF-3 binds to the 30S ribosomal subunit and shifts the equilibrium between 70S ribosomes and their 50S and 30S subunits in favor of the free subunits, thus enhancing the availability of 30S subunits on which protein synthesis initiation begins. The chain is Translation initiation factor IF-3 from Wolinella succinogenes (strain ATCC 29543 / DSM 1740 / CCUG 13145 / JCM 31913 / LMG 7466 / NCTC 11488 / FDC 602W) (Vibrio succinogenes).